The following is a 428-amino-acid chain: Glutamate-1-semialdehyde 2,1-aminomutase (428 aa).

Lys265 bears the N6-(pyridoxal phosphate)lysine mark.

This sequence belongs to the class-III pyridoxal-phosphate-dependent aminotransferase family. HemL subfamily. Homodimer. Pyridoxal 5'-phosphate is required as a cofactor.

It localises to the cytoplasm. It carries out the reaction (S)-4-amino-5-oxopentanoate = 5-aminolevulinate. Its pathway is porphyrin-containing compound metabolism; protoporphyrin-IX biosynthesis; 5-aminolevulinate from L-glutamyl-tRNA(Glu): step 2/2. The chain is Glutamate-1-semialdehyde 2,1-aminomutase from Ruthia magnifica subsp. Calyptogena magnifica.